Consider the following 266-residue polypeptide: Flavin-dependent thymidylate synthase (266 aa).

A ThyX domain is found at 11–222 (GFIRLVDYMG…PLACASFERH (212 aa)). Residues serine 57, 80–82 (RHR), and glutamate 88 contribute to the FAD site. DUMP is bound by residues 77–80 (QWIR), 88–92 (EISGR), and arginine 161. Positions 80–90 (RHRTARLNEIS) match the ThyX motif motif. FAD is bound by residues 177 to 179 (DLH) and histidine 183. Arginine 188 contacts dUMP. Residue arginine 188 is the Involved in ionization of N3 of dUMP, leading to its activation of the active site.

It belongs to the thymidylate synthase ThyX family. As to quaternary structure, homotetramer. Requires FAD as cofactor.

The catalysed reaction is dUMP + (6R)-5,10-methylene-5,6,7,8-tetrahydrofolate + NADPH + H(+) = dTMP + (6S)-5,6,7,8-tetrahydrofolate + NADP(+). It participates in pyrimidine metabolism; dTTP biosynthesis. Its function is as follows. Catalyzes the reductive methylation of 2'-deoxyuridine-5'-monophosphate (dUMP) to 2'-deoxythymidine-5'-monophosphate (dTMP) while utilizing 5,10-methylenetetrahydrofolate (mTHF) as the methyl donor, and NADPH and FADH(2) as the reductant. In Treponema denticola (strain ATCC 35405 / DSM 14222 / CIP 103919 / JCM 8153 / KCTC 15104), this protein is Flavin-dependent thymidylate synthase.